Reading from the N-terminus, the 88-residue chain is UPF0367 protein syc2447_c (88 aa).

This sequence belongs to the UPF0367 family.

The chain is UPF0367 protein syc2447_c from Synechococcus sp. (strain ATCC 27144 / PCC 6301 / SAUG 1402/1) (Anacystis nidulans).